The following is a 284-amino-acid chain: Nucleotide-binding protein PP_0949 (284 aa).

Glycine 8 to serine 15 contributes to the ATP binding site. Aspartate 60–asparagine 63 serves as a coordination point for GTP.

It belongs to the RapZ-like family.

Displays ATPase and GTPase activities. This chain is Nucleotide-binding protein PP_0949, found in Pseudomonas putida (strain ATCC 47054 / DSM 6125 / CFBP 8728 / NCIMB 11950 / KT2440).